The following is a 318-amino-acid chain: Transaldolase (318 aa).

Catalysis depends on lysine 132, which acts as the Schiff-base intermediate with substrate.

Belongs to the transaldolase family. Type 1 subfamily. Homodimer.

It is found in the cytoplasm. It carries out the reaction D-sedoheptulose 7-phosphate + D-glyceraldehyde 3-phosphate = D-erythrose 4-phosphate + beta-D-fructose 6-phosphate. Its pathway is carbohydrate degradation; pentose phosphate pathway; D-glyceraldehyde 3-phosphate and beta-D-fructose 6-phosphate from D-ribose 5-phosphate and D-xylulose 5-phosphate (non-oxidative stage): step 2/3. In terms of biological role, transaldolase is important for the balance of metabolites in the pentose-phosphate pathway. This is Transaldolase from Shewanella baltica (strain OS223).